The following is a 687-amino-acid chain: Protein FAR1-RELATED SEQUENCE 1 (687 aa).

The FAR1 domain maps to 35-137 (EFYKEYANSV…VKEHNHEIFT (103 aa)). The MULE domain occupies 211 to 254 (KAMHGCRPRVILTKHDQMLKEAVLEVFPSSRHCFYMWDTLGQMP). The SWIM-type zinc-finger motif lies at 440 to 476 (FVVVWNSESSEVVCSCRLFELKGFLCRHAMIVLQMSG). Residues 540–562 (NVLNEALRKWENKSNLIQNLEES) adopt a coiled-coil conformation.

This sequence belongs to the FHY3/FAR1 family. Expressed in rosette and cauline leaves, inflorescences stems, flowers and siliques.

It is found in the nucleus. Its function is as follows. Putative transcription activator involved in regulating light control of development. This is Protein FAR1-RELATED SEQUENCE 1 (FRS1) from Arabidopsis thaliana (Mouse-ear cress).